The chain runs to 179 residues: Large ribosomal subunit protein uL5 (179 aa).

This sequence belongs to the universal ribosomal protein uL5 family. In terms of assembly, part of the 50S ribosomal subunit; part of the 5S rRNA/L5/L18/L25 subcomplex. Contacts the 5S rRNA and the P site tRNA. Forms a bridge to the 30S subunit in the 70S ribosome.

In terms of biological role, this is one of the proteins that bind and probably mediate the attachment of the 5S RNA into the large ribosomal subunit, where it forms part of the central protuberance. In the 70S ribosome it contacts protein S13 of the 30S subunit (bridge B1b), connecting the 2 subunits; this bridge is implicated in subunit movement. Contacts the P site tRNA; the 5S rRNA and some of its associated proteins might help stabilize positioning of ribosome-bound tRNAs. This is Large ribosomal subunit protein uL5 from Caldanaerobacter subterraneus subsp. tengcongensis (strain DSM 15242 / JCM 11007 / NBRC 100824 / MB4) (Thermoanaerobacter tengcongensis).